Reading from the N-terminus, the 585-residue chain is Poly(A) RNA polymerase, mitochondrial (585 aa).

A mitochondrion-targeting transit peptide spans 1–37; it reads MAARGVGLLTRLPVCSQRRNRIPRSISRLLSCPGTIA. An N6-acetyllysine modification is found at Lys-90. ATP contacts are provided by residues 107–109 and 244–245; these read YES and GC. The Mg(2+) site is built by Asp-246 and Asp-248. Residues 441–486 enclose the PAP-associated domain; the sequence is ELLIKEFFEYFGNFAFNKNSINIRQGREQNKPDSSPLYIQNPFETS. Positions 537–585 are disordered; sequence PGSGHTSLSRKKKKKPMSEKVKGLLASIKSNSPDSSTDTSGKRTISTQA. Over residues 564–585 the composition is skewed to polar residues; sequence IKSNSPDSSTDTSGKRTISTQA.

The protein belongs to the DNA polymerase type-B-like family. Homodimer. Mg(2+) is required as a cofactor. Mn(2+) serves as cofactor.

Its subcellular location is the cytoplasm. The protein localises to the mitochondrion. The enzyme catalyses RNA(n) + ATP = RNA(n)-3'-adenine ribonucleotide + diphosphate. Functionally, polymerase that creates the 3' poly(A) tail of mitochondrial transcripts. Can use all four nucleotides, but has higher activity with ATP and UTP (in vitro). Plays a role in replication-dependent histone mRNA degradation. May be involved in the terminal uridylation of mature histone mRNAs before their degradation is initiated. Might be responsible for the creation of some UAA stop codons which are not encoded in mtDNA. The chain is Poly(A) RNA polymerase, mitochondrial (Mtpap) from Mus musculus (Mouse).